Here is a 193-residue protein sequence, read N- to C-terminus: uncharacterized protein (193 aa).

R8 contacts substrate. H9 functions as the Tele-phosphohistidine intermediate in the catalytic mechanism. Residues N15, Q21, and R58 each contribute to the substrate site. The active-site Proton donor/acceptor is E82. Residue H139 participates in substrate binding.

Belongs to the phosphoglycerate mutase family. GpmB subfamily.

In terms of biological role, phosphatase with broad substrate specificity. Does not have phosphoglycerate mutase activity. This is an uncharacterized protein from Bacillus subtilis (strain 168).